We begin with the raw amino-acid sequence, 308 residues long: Inactive C-alpha-formylglycine-generating enzyme 2 (308 aa).

Positions 1-33 (MRSEFWFPSMGSLLPPVLLLWLLSCPRLQLGHA) are cleaved as a signal peptide. Cys163 and Cys297 are oxidised to a cystine. N-linked (GlcNAc...) asparagine glycosylation occurs at Asn198. Positions 201, 202, 215, 217, 236, 239, 241, and 243 each coordinate Ca(2+). The segment covering 281-291 (RMGNTPDSASD) has biased composition (polar residues). Residues 281-308 (RMGNTPDSASDNLGFRCASSAGRPKEDL) are disordered. The Non-canonical ER retention motif motif lies at 305–308 (KEDL).

The protein belongs to the sulfatase-modifying factor family. Homodimer and heterodimer with SUMF1.

The protein localises to the endoplasmic reticulum lumen. Lacks formylglycine generating activity and is unable to convert newly synthesized inactive sulfatases to their active form. Inhibits the activation of sulfatases by SUMF1. The sequence is that of Inactive C-alpha-formylglycine-generating enzyme 2 from Mus musculus (Mouse).